A 224-amino-acid polypeptide reads, in one-letter code: Attacin-A (224 aa).

An N-terminal signal peptide occupies residues 1–20 (MQKTSILIVALVALFAITEA). The propeptide occupies 21 to 34 (LPSLPTTGPIRVRR).

Belongs to the attacin/sarcotoxin-2 family. As to expression, hemolymph (at protein level).

It localises to the secreted. Its function is as follows. Hemolymph antibacterial protein. This Drosophila melanogaster (Fruit fly) protein is Attacin-A (AttA).